Consider the following 219-residue polypeptide: Ras-like protein 1 (219 aa).

15–22 is a binding site for GTP; it reads GDGGVGKS. The short motif at 37 to 45 is the Effector region element; the sequence is YDPTIEDSY. GTP contacts are provided by residues 62–66 and 121–124; these read DTAGQ and NKCD. A Cysteine methyl ester modification is found at Cys-216. Cys-216 carries the S-farnesyl cysteine lipid modification. Residues 217 to 219 constitute a propeptide, removed in mature form; it reads VIC.

Belongs to the small GTPase superfamily. Ras family. In terms of assembly, scd1, scd2, cdc42, and ras1, in its GTP-bound state, act cooperatively to form a protein complex. Palmitoylated by the erf2-erf4 complex.

The protein localises to the cell membrane. The catalysed reaction is GTP + H2O = GDP + phosphate + H(+). Alternates between an inactive form bound to GDP and an active form bound to GTP. Activated by a guanine nucleotide-exchange factor (GEF) and inactivated by a GTPase-activating protein (GAP). Functionally, participates in the process of sexual differentiation and the determination of cell shape. Essential for mating and for recognition of the mating pheromone, but not for vegetative growth. Does not regulate the intracellular cAMP level. Regulates two downstream pathways, namely the byr2/byr1/spk1 mitogen-activated protein kinase cascade and the cdc42 small G protein pathway. The former is relevant to mating and sporulation, whereas the latter is relevant to mating, cell growth and cell morphology. In Schizosaccharomyces pombe (strain 972 / ATCC 24843) (Fission yeast), this protein is Ras-like protein 1 (ras1).